We begin with the raw amino-acid sequence, 202 residues long: Ribonuclease HII (202 aa).

The region spanning 11–200 (GLIAGVDEVG…VRKAIEEFNR (190 aa)) is the RNase H type-2 domain. Positions 17, 18, and 109 each coordinate a divalent metal cation.

This sequence belongs to the RNase HII family. Mn(2+) serves as cofactor. The cofactor is Mg(2+).

The protein resides in the cytoplasm. The catalysed reaction is Endonucleolytic cleavage to 5'-phosphomonoester.. Endonuclease that specifically degrades the RNA of RNA-DNA hybrids. This is Ribonuclease HII from Actinobacillus succinogenes (strain ATCC 55618 / DSM 22257 / CCUG 43843 / 130Z).